Consider the following 360-residue polypeptide: Phospho-N-acetylmuramoyl-pentapeptide-transferase (360 aa).

A run of 10 helical transmembrane segments spans residues 27–47 (GALF…ISLL), 70–90 (GTPT…ILLW), 98–118 (VWVT…DDYL), 134–154 (LLLE…YSPA), 168–188 (ALLN…VGAG), 199–219 (GLAI…AYLV), 239–259 (LAVV…FNAP), 263–283 (IFMG…IAVA), 288–308 (IVLA…IIQV), and 337–357 (QVVI…LATL).

The protein belongs to the glycosyltransferase 4 family. MraY subfamily. The cofactor is Mg(2+).

The protein localises to the cell inner membrane. The enzyme catalyses UDP-N-acetyl-alpha-D-muramoyl-L-alanyl-gamma-D-glutamyl-meso-2,6-diaminopimeloyl-D-alanyl-D-alanine + di-trans,octa-cis-undecaprenyl phosphate = di-trans,octa-cis-undecaprenyl diphospho-N-acetyl-alpha-D-muramoyl-L-alanyl-D-glutamyl-meso-2,6-diaminopimeloyl-D-alanyl-D-alanine + UMP. It functions in the pathway cell wall biogenesis; peptidoglycan biosynthesis. Functionally, catalyzes the initial step of the lipid cycle reactions in the biosynthesis of the cell wall peptidoglycan: transfers peptidoglycan precursor phospho-MurNAc-pentapeptide from UDP-MurNAc-pentapeptide onto the lipid carrier undecaprenyl phosphate, yielding undecaprenyl-pyrophosphoryl-MurNAc-pentapeptide, known as lipid I. The chain is Phospho-N-acetylmuramoyl-pentapeptide-transferase from Methylorubrum populi (strain ATCC BAA-705 / NCIMB 13946 / BJ001) (Methylobacterium populi).